The primary structure comprises 125 residues: Ribosome maturation factor RimP (125 aa).

This sequence belongs to the RimP family.

It localises to the cytoplasm. Required for maturation of 30S ribosomal subunits. This is Ribosome maturation factor RimP from Rickettsia canadensis (strain McKiel).